The following is a 381-amino-acid chain: MSQFFEAATPVAIPTNNTNGGSSDAGSAATGGAPVVGTTAQPTINHRLLLSLKEAAKIIGTKGSTISRIRAANSVKIGISEKVPGCSDRILSCAGNVINVANAIGDIVDVLNKRNPENEDAAEGEAEEHYYFHFLNHILPAPSKDEIRDLQQLEDIGYVRLIVANSHISSIIGKAGATIKSLINKHGVKIVASKDFLPASDERIIEIQGFPGSITNVLIEISEIILSDVDVRFSTERSYFPHLKKSSGEPTSPSTSSNTRIELKIPELYVGAIIGRGMNRIKNLKTFTKTNIVVERKDDDDKDENFRKFIITSKFPKNVKLAESMLLKNLNTEIEKRENYKRKLEAAEGDATVVTERSDSASFLEEKEEPQKNHDNKEEQS.

A disordered region spans residues 1–34; that stretch reads MSQFFEAATPVAIPTNNTNGGSSDAGSAATGGAP. Over residues 15 to 33 the composition is skewed to low complexity; that stretch reads TNNTNGGSSDAGSAATGGA. KH domains are found at residues 43–107, 156–221, and 258–326; these read TINH…IGDI, IGYV…LIEI, and NTRI…ESML. The disordered stretch occupies residues 344-381; sequence LEAAEGDATVVTERSDSASFLEEKEEPQKNHDNKEEQS. Ser358, Ser360, and Ser362 each carry phosphoserine. Positions 369 to 381 are enriched in basic and acidic residues; that stretch reads EPQKNHDNKEEQS.

Belongs to the HEK2 family. In terms of assembly, binds RNA. In terms of processing, phosphorylated by the plasma membrane-Anchored casein kinase YCK1. Phosphorylation at its C-terminus reduces its RNA-binding capacity.

It is found in the cytoplasm. It localises to the P-body. The protein resides in the nucleus. The protein localises to the chromosome. Its subcellular location is the telomere. Its function is as follows. RNA-binding protein involved in the correct localization of transcripts in the cell. RNA localization is a widespread mechanism for achieving localized protein synthesis. Required for the asymmetric localization to the daughter cell nucleus of the ASH1 transcript, coding for a specific repressor of transcription. Overexpression inhibits translation of the ASH1 transcript. Involved in the stability of transcripts, like the MTL1 mRNA. Involved in structural and functional organization of telomeric chromatin and regulates silencing at the HMR locus. The polypeptide is Heterogeneous nuclear rnp K-like protein 2 (HEK2) (Saccharomyces cerevisiae (strain JAY291) (Baker's yeast)).